The following is a 300-amino-acid chain: F-box protein SKIP1 (300 aa).

The F-box; degenerate domain occupies 11-52 (LAPEILINIISRLTIQELWTGPMFVQKSWLTVCRDPYLWSIF).

Part of a SCF (ASK-cullin-F-box) protein ligase complex. Interacts with SKP1A/ASK1 and SKP1B/ASK2.

It localises to the nucleus. It participates in protein modification; protein ubiquitination. In terms of biological role, component of SCF(ASK-cullin-F-box) E3 ubiquitin ligase complexes, which may mediate the ubiquitination and subsequent proteasomal degradation of target proteins. The sequence is that of F-box protein SKIP1 (SKIP1) from Arabidopsis thaliana (Mouse-ear cress).